The chain runs to 560 residues: Membrane-bound O-acyltransferase GUP1 (560 aa).

At 1–43 (MSLISILSPLITSEGLDSRIKPSPKKDASTTTKPSLWKTTEFK) the chain is on the extracellular side. The chain crosses the membrane as a helical span at residues 44–64 (FYYIAFLVVVPLMFYAGLQAS). Topologically, residues 65–101 (SPENPNYARYERLLSQGWLFGRKVDNSDSQYRFFRDN) are cytoplasmic. Residues 102–122 (FALLSVLMLVHTSIKRIVLYS) traverse the membrane as a helical segment. The Extracellular portion of the chain corresponds to 123–131 (TNITKLRFD). Residues 132–152 (LIFGLIFLVAAHGVNSIRILA) form a helical membrane-spanning segment. At 153–165 (HMLILYAIAHVLK) the chain is on the cytoplasmic side. The chain crosses the membrane as a helical span at residues 166–185 (NFRRIATISIWIYGISTLFI). Residues 186-276 (NDNFRAYPFG…AAHPIQDYSL (91 aa)) lie on the Extracellular side of the membrane. Residues 277 to 297 (MNYIAYVTYTPLFIAGPIITF) form a helical membrane-spanning segment. The Cytoplasmic portion of the chain corresponds to 298 to 322 (NDYVYQSKHTLPSINFKFIFYYAVR). A helical transmembrane segment spans residues 323 to 343 (FVIALLSMEFILHFLHVVAIS). Residues 344 to 352 (KTKAWENDT) lie on the Extracellular side of the membrane. A helical transmembrane segment spans residues 353-373 (PFQISMIGLFNLNIIWLKLLI). Topologically, residues 374–432 (PWRLFRLWALLDGIDTPENMIRCVDNNYSSLAFWRAWHRSYNKWVVRYIYIPLGGSKNR) are cytoplasmic. Helical transmembrane passes span 433 to 453 (VLTSLAVFSFVAIWHDIELKL) and 454 to 474 (LLWGWLIVLFLLPEIFATQIF). The active site involves His447. At 475–485 (SHYTDAVWYRH) the chain is on the cytoplasmic side. A helical membrane pass occupies residues 486 to 506 (VCAVGAVFNIWVMMIANLFGF). The Extracellular segment spans residues 507-526 (CLGSDGTKKLLSDMFCTVSG). A helical membrane pass occupies residues 527–547 (FKFVILASVSLFIAVQIMFEI). The Cytoplasmic segment spans residues 548-560 (REEEKRHGIYLKC).

This sequence belongs to the membrane-bound acyltransferase family. Interacts with mitochondrial outer membrane voltage-dependent anion channel (VDAC) POR1.

The protein resides in the cell membrane. It localises to the endoplasmic reticulum membrane. The protein localises to the mitochondrion membrane. In terms of biological role, membrane-bound O-acyltransferase involved in the remodeling of glycosylphosphatidylinositol (GPI) anchors. Acts only on GPI-anchored proteins, but not on free GPI lipids. Acts as an acyltransferase for GPI anchors that adds C26 fatty acids to the sn2 position of lyso-PI-containing GPI anchors. PER1 first deacylates, GUP1 subsequently reacylates the anchor lipid, thus replacing a shorter fatty acid (C16:0 or C18:0) by C26:0. Also involved in lipid metabolism, having profound effects on sphingolipid-sterol-ordered domains integrity and assembly. Together with GUP2, has an influence on the chemical composition of the yeast extracellular matrix (yECM) in yeast multicellular aggregates, such as biofilms and colonies. Involved in cell integrity and apoptosis. The sequence is that of Membrane-bound O-acyltransferase GUP1 (GUP1) from Saccharomyces cerevisiae (strain ATCC 204508 / S288c) (Baker's yeast).